The sequence spans 79 residues: ATP synthase subunit c (79 aa).

2 helical membrane passes run 11–31 (MAAA…IGIL) and 53–73 (FFIV…LGLY).

Belongs to the ATPase C chain family. F-type ATPases have 2 components, F(1) - the catalytic core - and F(0) - the membrane proton channel. F(1) has five subunits: alpha(3), beta(3), gamma(1), delta(1), epsilon(1). F(0) has three main subunits: a(1), b(2) and c(10-14). The alpha and beta chains form an alternating ring which encloses part of the gamma chain. F(1) is attached to F(0) by a central stalk formed by the gamma and epsilon chains, while a peripheral stalk is formed by the delta and b chains.

It is found in the cell inner membrane. In terms of biological role, f(1)F(0) ATP synthase produces ATP from ADP in the presence of a proton or sodium gradient. F-type ATPases consist of two structural domains, F(1) containing the extramembraneous catalytic core and F(0) containing the membrane proton channel, linked together by a central stalk and a peripheral stalk. During catalysis, ATP synthesis in the catalytic domain of F(1) is coupled via a rotary mechanism of the central stalk subunits to proton translocation. Functionally, key component of the F(0) channel; it plays a direct role in translocation across the membrane. A homomeric c-ring of between 10-14 subunits forms the central stalk rotor element with the F(1) delta and epsilon subunits. The protein is ATP synthase subunit c of Proteus mirabilis (strain HI4320).